The sequence spans 156 residues: Transcription antitermination protein NusB (156 aa).

The protein belongs to the NusB family.

Involved in transcription antitermination. Required for transcription of ribosomal RNA (rRNA) genes. Binds specifically to the boxA antiterminator sequence of the ribosomal RNA (rrn) operons. This Rickettsia bellii (strain OSU 85-389) protein is Transcription antitermination protein NusB.